We begin with the raw amino-acid sequence, 70 residues long: Cold shock-like protein CspH (70 aa).

The 61-residue stretch at G7 to V67 folds into the CSD domain.

Its subcellular location is the cytoplasm. In Salmonella typhi, this protein is Cold shock-like protein CspH (cspH).